The following is a 78-amino-acid chain: Large ribosomal subunit protein bL28 (78 aa).

The segment at 1–21 is disordered; sequence MSRVCQVTGKKPMVGNNRSHA.

The protein belongs to the bacterial ribosomal protein bL28 family.

This chain is Large ribosomal subunit protein bL28, found in Shewanella baltica (strain OS223).